The sequence spans 522 residues: 2-isopropylmalate synthase (522 aa).

Positions 5–267 constitute a Pyruvate carboxyltransferase domain; sequence VIIFDTTLRD…ETGINAKEIH (263 aa). Residues aspartate 14, histidine 202, histidine 204, and asparagine 238 each coordinate Mn(2+). The tract at residues 392–522 is regulatory domain; it reads QLQQLVVQSD…MHKNRELGGV (131 aa).

This sequence belongs to the alpha-IPM synthase/homocitrate synthase family. LeuA type 1 subfamily. Homodimer. Mn(2+) serves as cofactor.

The protein localises to the cytoplasm. The enzyme catalyses 3-methyl-2-oxobutanoate + acetyl-CoA + H2O = (2S)-2-isopropylmalate + CoA + H(+). It participates in amino-acid biosynthesis; L-leucine biosynthesis; L-leucine from 3-methyl-2-oxobutanoate: step 1/4. Its function is as follows. Catalyzes the condensation of the acetyl group of acetyl-CoA with 3-methyl-2-oxobutanoate (2-ketoisovalerate) to form 3-carboxy-3-hydroxy-4-methylpentanoate (2-isopropylmalate). This chain is 2-isopropylmalate synthase, found in Shewanella sp. (strain MR-7).